Here is a 188-residue protein sequence, read N- to C-terminus: Probable nicotinate-nucleotide adenylyltransferase (188 aa).

This sequence belongs to the NadD family.

The catalysed reaction is nicotinate beta-D-ribonucleotide + ATP + H(+) = deamido-NAD(+) + diphosphate. It participates in cofactor biosynthesis; NAD(+) biosynthesis; deamido-NAD(+) from nicotinate D-ribonucleotide: step 1/1. Functionally, catalyzes the reversible adenylation of nicotinate mononucleotide (NaMN) to nicotinic acid adenine dinucleotide (NaAD). The polypeptide is Probable nicotinate-nucleotide adenylyltransferase (Sulfurovum sp. (strain NBC37-1)).